The chain runs to 1282 residues: Autophagy-related protein 11 (1282 aa).

Coiled-coil stretches lie at residues 579–641 (VANE…QQYK), 722–799 (KHLD…ELQA), and 834–917 (DVNE…HNNL). Positions 586–609 (NDKLLANSKDENNDKQAEGGGHMS) are disordered. Residues 593–602 (SKDENNDKQA) are compositionally biased toward basic and acidic residues.

The protein belongs to the ATG11 family. In terms of assembly, homodimer.

It is found in the preautophagosomal structure membrane. Its subcellular location is the vacuole membrane. In terms of biological role, involved in cytoplasm to vacuole transport (Cvt), pexophagy, mitophagy and nucleophagy. Recruits mitochondria for their selective degradation via autophagy (mitophagy) during starvation. Works as scaffold proteins that recruit ATG proteins to the pre-autophagosome (PAS), the site of vesicle/autophagosome formation. Required for the Cvt vesicles completion. This Debaryomyces hansenii (strain ATCC 36239 / CBS 767 / BCRC 21394 / JCM 1990 / NBRC 0083 / IGC 2968) (Yeast) protein is Autophagy-related protein 11 (ATG11).